Reading from the N-terminus, the 638-residue chain is Homeobox protein 10 (638 aa).

Disordered stretches follow at residues 23 to 55 (ETQP…LNTN), 76 to 139 (TDEN…VNTN), and 195 to 219 (IANE…EEAK). Low complexity-rich tracts occupy residues 24-55 (TQPT…LNTN) and 80-139 (NTSV…VNTN). The span at 205–214 (EPQTNSNVNG) shows a compositional bias: polar residues. A DNA-binding region (homeobox) is located at residues 301–360 (NKKKRQRTSPEQLAILEQIFETDKMPSQQIRVRLANQLGMSSRRVQIWFQNKRAKVKRGG). Disordered regions lie at residues 381 to 431 (EDED…TSSD) and 448 to 638 (SSSS…IVKN). Composition is skewed to low complexity over residues 388 to 411 (SLTI…NNNG), 419 to 430 (LSSSPTNLNTSS), and 462 to 501 (NNTN…TTTT). Composition is skewed to polar residues over residues 502–522 (SSSP…NKLT) and 545–573 (SLNS…TDKQ). Residues 575-625 (NSDFSNFNNNNNNNNNNNNNNNNNNNINNNGNNNSNNNDSNNNNNKSNFSD) show a composition bias toward low complexity.

The protein resides in the nucleus. Putative transcription factor. The protein is Homeobox protein 10 (hbx10) of Dictyostelium discoideum (Social amoeba).